A 377-amino-acid polypeptide reads, in one-letter code: MTTAAIIVAAGRGTRAGGGVPKQWRPLAGRRVADWTLDRFALRQITHVVLVLHPEDHDAWDEFATTPLILAPGGSDRAGSVRNGLAALDGLGITKVLIHDVARPCVSAATIGAVLDALDAHPGAAPGLAVTDALWTGAEGLVTGTRERDGLFAAQTPQGFRYDAIVAAHAAHPGGAADDVEVARAAELTVAIVPGDPDNLKITRAEDFARAERILRQDMDVRLGNGYDVHRFGPGDHVILCGIKVPHDRGLQGHSDADVGMHAVTDALYGALVEGDIGRHFPPSDPQWKGAASEIFLRHAVDLVRARGFAVSNIDCTLVCEYPKIGPHALEMQAEMARIMGLEASRVSVKATTSERLGFTGRSEGIAALATACLVKP.

Residues 1–221 (MTTAAIIVAA…ERILRQDMDV (221 aa)) are 2-C-methyl-D-erythritol 4-phosphate cytidylyltransferase. A 2-C-methyl-D-erythritol 2,4-cyclodiphosphate synthase region spans residues 222–377 (RLGNGYDVHR…ALATACLVKP (156 aa)). D228 and H230 together coordinate a divalent metal cation. 4-CDP-2-C-methyl-D-erythritol 2-phosphate contacts are provided by residues 228–230 (DVH) and 254–255 (HS). Residue H262 coordinates a divalent metal cation. Residues 276 to 278 (DIG), 352 to 355 (TTSE), F359, and R362 contribute to the 4-CDP-2-C-methyl-D-erythritol 2-phosphate site.

This sequence in the N-terminal section; belongs to the IspD/TarI cytidylyltransferase family. IspD subfamily. The protein in the C-terminal section; belongs to the IspF family. A divalent metal cation is required as a cofactor.

It carries out the reaction 2-C-methyl-D-erythritol 4-phosphate + CTP + H(+) = 4-CDP-2-C-methyl-D-erythritol + diphosphate. The catalysed reaction is 4-CDP-2-C-methyl-D-erythritol 2-phosphate = 2-C-methyl-D-erythritol 2,4-cyclic diphosphate + CMP. It functions in the pathway isoprenoid biosynthesis; isopentenyl diphosphate biosynthesis via DXP pathway; isopentenyl diphosphate from 1-deoxy-D-xylulose 5-phosphate: step 2/6. It participates in isoprenoid biosynthesis; isopentenyl diphosphate biosynthesis via DXP pathway; isopentenyl diphosphate from 1-deoxy-D-xylulose 5-phosphate: step 4/6. Its function is as follows. Bifunctional enzyme that catalyzes the formation of 4-diphosphocytidyl-2-C-methyl-D-erythritol from CTP and 2-C-methyl-D-erythritol 4-phosphate (MEP) (IspD), and catalyzes the conversion of 4-diphosphocytidyl-2-C-methyl-D-erythritol 2-phosphate (CDP-ME2P) to 2-C-methyl-D-erythritol 2,4-cyclodiphosphate (ME-CPP) with a corresponding release of cytidine 5-monophosphate (CMP) (IspF). In Ruegeria pomeroyi (strain ATCC 700808 / DSM 15171 / DSS-3) (Silicibacter pomeroyi), this protein is Bifunctional enzyme IspD/IspF.